The primary structure comprises 318 residues: 2-keto-3-deoxygluconate permease (318 aa).

Transmembrane regions (helical) follow at residues 10–30, 42–62, 82–102, 109–129, 139–159, 163–183, 194–214, 224–244, 257–277, and 289–309; these read LPGGMMLVPLLLGAVCHTLWP, GLISGTVPILAVWFFCMGATI, IAMAWLVAVLCAPLLPIGGVP, LSVLALVAAMDMTNGGLYAAL, AGAVVLMSLESGPLISMLILG, LASFDPLLFVGAVLPLLLGFA, FFAQATTTLVPFFGFALGNTL, ASGVLLGVAVIVITGLPLLLA, VAASSTAGAAVATPALIAGMA, and ALVASAVIVTSLLVPLLTALY.

Belongs to the KdgT transporter family.

It is found in the cell inner membrane. The catalysed reaction is 2-dehydro-3-deoxy-D-gluconate(in) + H(+)(in) = 2-dehydro-3-deoxy-D-gluconate(out) + H(+)(out). In terms of biological role, catalyzes the proton-dependent uptake of 2-keto-3-deoxygluconate (KDG) into the cell. The polypeptide is 2-keto-3-deoxygluconate permease (Xanthomonas euvesicatoria pv. vesicatoria (strain 85-10) (Xanthomonas campestris pv. vesicatoria)).